A 364-amino-acid chain; its full sequence is Phosphoserine aminotransferase (364 aa).

Arg46 provides a ligand contact to L-glutamate. Pyridoxal 5'-phosphate-binding positions include 80 to 81 (AR), Trp106, Thr157, Asp176, and Gln199. Lys200 carries the N6-(pyridoxal phosphate)lysine modification. A pyridoxal 5'-phosphate-binding site is contributed by 241–242 (NT).

It belongs to the class-V pyridoxal-phosphate-dependent aminotransferase family. SerC subfamily. As to quaternary structure, homodimer. Pyridoxal 5'-phosphate serves as cofactor.

The protein resides in the cytoplasm. The catalysed reaction is O-phospho-L-serine + 2-oxoglutarate = 3-phosphooxypyruvate + L-glutamate. The enzyme catalyses 4-(phosphooxy)-L-threonine + 2-oxoglutarate = (R)-3-hydroxy-2-oxo-4-phosphooxybutanoate + L-glutamate. The protein operates within amino-acid biosynthesis; L-serine biosynthesis; L-serine from 3-phospho-D-glycerate: step 2/3. Its pathway is cofactor biosynthesis; pyridoxine 5'-phosphate biosynthesis; pyridoxine 5'-phosphate from D-erythrose 4-phosphate: step 3/5. Catalyzes the reversible conversion of 3-phosphohydroxypyruvate to phosphoserine and of 3-hydroxy-2-oxo-4-phosphonooxybutanoate to phosphohydroxythreonine. This chain is Phosphoserine aminotransferase, found in Vibrio vulnificus (strain YJ016).